The primary structure comprises 431 residues: Serine hydroxymethyltransferase (431 aa).

Residues Leu-127 and 131 to 133 each bind (6S)-5,6,7,8-tetrahydrofolate; that span reads GHL. Lys-236 carries the N6-(pyridoxal phosphate)lysine modification.

This sequence belongs to the SHMT family. In terms of assembly, homodimer. The cofactor is pyridoxal 5'-phosphate.

It localises to the cytoplasm. It carries out the reaction (6R)-5,10-methylene-5,6,7,8-tetrahydrofolate + glycine + H2O = (6S)-5,6,7,8-tetrahydrofolate + L-serine. It participates in one-carbon metabolism; tetrahydrofolate interconversion. Its pathway is amino-acid biosynthesis; glycine biosynthesis; glycine from L-serine: step 1/1. Its function is as follows. Catalyzes the reversible interconversion of serine and glycine with tetrahydrofolate (THF) serving as the one-carbon carrier. This reaction serves as the major source of one-carbon groups required for the biosynthesis of purines, thymidylate, methionine, and other important biomolecules. Also exhibits THF-independent aldolase activity toward beta-hydroxyamino acids, producing glycine and aldehydes, via a retro-aldol mechanism. This Granulibacter bethesdensis (strain ATCC BAA-1260 / CGDNIH1) protein is Serine hydroxymethyltransferase.